The primary structure comprises 364 residues: Phosphoserine aminotransferase (364 aa).

Arg-42 serves as a coordination point for L-glutamate. Pyridoxal 5'-phosphate contacts are provided by residues 76-77 (AS), Trp-100, Thr-150, Asp-169, and Gln-192. The residue at position 193 (Lys-193) is an N6-(pyridoxal phosphate)lysine. 234-235 (NT) contacts pyridoxal 5'-phosphate.

The protein belongs to the class-V pyridoxal-phosphate-dependent aminotransferase family. SerC subfamily. Homodimer. It depends on pyridoxal 5'-phosphate as a cofactor.

It is found in the cytoplasm. The catalysed reaction is O-phospho-L-serine + 2-oxoglutarate = 3-phosphooxypyruvate + L-glutamate. It carries out the reaction 4-(phosphooxy)-L-threonine + 2-oxoglutarate = (R)-3-hydroxy-2-oxo-4-phosphooxybutanoate + L-glutamate. It functions in the pathway amino-acid biosynthesis; L-serine biosynthesis; L-serine from 3-phospho-D-glycerate: step 2/3. Functionally, catalyzes the reversible conversion of 3-phosphohydroxypyruvate to phosphoserine and of 3-hydroxy-2-oxo-4-phosphonooxybutanoate to phosphohydroxythreonine. The polypeptide is Phosphoserine aminotransferase (Shouchella clausii (strain KSM-K16) (Alkalihalobacillus clausii)).